A 240-amino-acid chain; its full sequence is Small ribosomal subunit protein uS3 (240 aa).

A KH type-2 domain is found at 39-108; it reads LRKFLKKKLY…ELILNIKEER (70 aa). Basic and acidic residues predominate over residues 213–224; it reads MNSDDTATPERK. A disordered region spans residues 213-240; the sequence is MNSDDTATPERKAPRRRKGRRNVNAKKN. Over residues 225–240 the composition is skewed to basic residues; sequence APRRRKGRRNVNAKKN.

This sequence belongs to the universal ribosomal protein uS3 family. In terms of assembly, part of the 30S ribosomal subunit. Forms a tight complex with proteins S10 and S14.

Binds the lower part of the 30S subunit head. Binds mRNA in the 70S ribosome, positioning it for translation. This Nautilia profundicola (strain ATCC BAA-1463 / DSM 18972 / AmH) protein is Small ribosomal subunit protein uS3.